Here is a 92-residue protein sequence, read N- to C-terminus: Small ribosomal subunit protein uS19 (92 aa).

It belongs to the universal ribosomal protein uS19 family.

In terms of biological role, protein S19 forms a complex with S13 that binds strongly to the 16S ribosomal RNA. The protein is Small ribosomal subunit protein uS19 of Rickettsia canadensis (strain McKiel).